We begin with the raw amino-acid sequence, 264 residues long: Enhancer of mRNA-decapping protein 1 (264 aa).

Disordered regions lie at residues 1 to 180 (MLAQ…FSTI) and 193 to 264 (YNNP…LRDY). Positions 63 to 74 (GKKSTSKPKSKS) are enriched in basic residues. Polar residues predominate over residues 83 to 92 (NFKLTASPSL). Residues 108 to 118 (PSPPPPPPPST) are compositionally biased toward pro residues. 3 stretches are compositionally biased toward low complexity: residues 119-134 (QPSTSTSTSPTPRTST), 161-172 (NGKKPNFFNNNN), and 208-226 (NNNNNNSSNNSNNSNNSNS). Positions 248–264 (FKSNNGSPRQSSGLRDY) are enriched in polar residues.

It belongs to the EDC family.

Its subcellular location is the cytoplasm. Functionally, mRNA-binding protein which stimulates mRNA decapping. The protein is Enhancer of mRNA-decapping protein 1 (EDC1) of Candida albicans (strain SC5314 / ATCC MYA-2876) (Yeast).